Consider the following 224-residue polypeptide: C-&gt;U-editing enzyme APOBEC-2 (224 aa).

A disordered region spans residues 1 to 24 (MAQKEEAAVATEAASQNGEDLENL). 2 residues coordinate Zn(2+): E60 and H98. The CMP/dCMP-type deaminase domain occupies 64-169 (GRNKTFLCYV…PEIQAALKKL (106 aa)). The active-site Proton donor is the E100. 2 residues coordinate Zn(2+): C128 and C131.

The protein belongs to the cytidine and deoxycytidylate deaminase family. In terms of assembly, homotetramer. Requires Zn(2+) as cofactor. In terms of tissue distribution, expressed exclusively in heart and skeletal muscle.

The catalysed reaction is cytidine(6666) in apoB mRNA + H2O + H(+) = uridine(6666) in apoB mRNA + NH4(+). Probable C to U editing enzyme whose physiological substrate is not yet known. Does not display detectable apoB mRNA editing. Has a low intrinsic cytidine deaminase activity. May play a role in the epigenetic regulation of gene expression through the process of active DNA demethylation. The sequence is that of C-&gt;U-editing enzyme APOBEC-2 (APOBEC2) from Homo sapiens (Human).